The following is a 439-amino-acid chain: Serine--tRNA ligase (439 aa).

237–239 (TAE) provides a ligand contact to L-serine. 268-270 (RAE) is a binding site for ATP. Glutamate 291 serves as a coordination point for L-serine. 362 to 365 (EISS) is a binding site for ATP. Residue serine 397 coordinates L-serine.

Belongs to the class-II aminoacyl-tRNA synthetase family. Type-1 seryl-tRNA synthetase subfamily. Homodimer. The tRNA molecule binds across the dimer.

Its subcellular location is the cytoplasm. It carries out the reaction tRNA(Ser) + L-serine + ATP = L-seryl-tRNA(Ser) + AMP + diphosphate + H(+). It catalyses the reaction tRNA(Sec) + L-serine + ATP = L-seryl-tRNA(Sec) + AMP + diphosphate + H(+). It functions in the pathway aminoacyl-tRNA biosynthesis; selenocysteinyl-tRNA(Sec) biosynthesis; L-seryl-tRNA(Sec) from L-serine and tRNA(Sec): step 1/1. Catalyzes the attachment of serine to tRNA(Ser). Is also able to aminoacylate tRNA(Sec) with serine, to form the misacylated tRNA L-seryl-tRNA(Sec), which will be further converted into selenocysteinyl-tRNA(Sec). In Afipia carboxidovorans (strain ATCC 49405 / DSM 1227 / KCTC 32145 / OM5) (Oligotropha carboxidovorans), this protein is Serine--tRNA ligase.